An 84-amino-acid polypeptide reads, in one-letter code: MAKKKSDQFEEALKKLQDIVEKLERGDMPLEEAMEAFSEGIRLARVCHGKLEEAERKVRILLKEQEGDWTTSPFEPASGEPPGG.

A disordered region spans residues 65 to 84 (QEGDWTTSPFEPASGEPPGG).

It belongs to the XseB family. As to quaternary structure, heterooligomer composed of large and small subunits.

Its subcellular location is the cytoplasm. It catalyses the reaction Exonucleolytic cleavage in either 5'- to 3'- or 3'- to 5'-direction to yield nucleoside 5'-phosphates.. In terms of biological role, bidirectionally degrades single-stranded DNA into large acid-insoluble oligonucleotides, which are then degraded further into small acid-soluble oligonucleotides. In Syntrophobacter fumaroxidans (strain DSM 10017 / MPOB), this protein is Exodeoxyribonuclease 7 small subunit.